We begin with the raw amino-acid sequence, 263 residues long: Neuferricin (263 aa).

The N-terminal stretch at 1 to 22 (MLRICGLGVVLSLAVAAVAVMA) is a signal peptide. The 100-residue stretch at 35 to 134 (IRLFLPEELA…KNYVFVGRLV (100 aa)) folds into the Cytochrome b5 heme-binding domain. The tract at residues 220 to 249 (VRTTGPPSDQQDNPRHSNHGDLDNPNLEEY) is disordered. The span at 231 to 241 (DNPRHSNHGDL) shows a compositional bias: basic and acidic residues.

The protein belongs to the cytochrome b5 family. MAPR subfamily. In terms of tissue distribution, expressed in various tissues including brain, heart, adrenal gland, and kidney. In the brain, mainly expressed in pyramidal cells around the CA3 region of Ammon horn in hippocampus. Present in brain (at protein level).

Its subcellular location is the secreted. Functionally, heme-binding protein which promotes neuronal but not astrocyte differentiation. The protein is Neuferricin of Mus musculus (Mouse).